The chain runs to 198 residues: Nucleoid occlusion factor SlmA (198 aa).

Residues 10-70 (NRREEILQSL…SLIEFIEDSL (61 aa)) form the HTH tetR-type domain. Residues 33-52 (TTAKLAASVGVSEAALYRHF) constitute a DNA-binding region (H-T-H motif). The stretch at 117 to 144 (EQDRLQGRINQLFERIEAQLRQVLREKR) forms a coiled coil.

Belongs to the nucleoid occlusion factor SlmA family. In terms of assembly, homodimer. Interacts with FtsZ.

The protein localises to the cytoplasm. It is found in the nucleoid. Its function is as follows. Required for nucleoid occlusion (NO) phenomenon, which prevents Z-ring formation and cell division over the nucleoid. Acts as a DNA-associated cell division inhibitor that binds simultaneously chromosomal DNA and FtsZ, and disrupts the assembly of FtsZ polymers. SlmA-DNA-binding sequences (SBS) are dispersed on non-Ter regions of the chromosome, preventing FtsZ polymerization at these regions. The protein is Nucleoid occlusion factor SlmA of Salmonella paratyphi A (strain ATCC 9150 / SARB42).